The sequence spans 317 residues: Heme A synthase (317 aa).

The Cytoplasmic segment spans residues 1-6; that stretch reads MQRSLK. A helical transmembrane segment spans residues 7 to 27; sequence WFASTTTVAMLFVLIGGALVT. Over 28–54 the chain is Extracellular; that stretch reads KTDSGMGCGRSWPLCHGQWIPDDITPQ. Cysteines 35 and 42 form a disulfide. A helical membrane pass occupies residues 55–75; the sequence is LVIELSHRLVSGLAAIMVLIL. The active site involves glutamate 58. Histidine 61 lines the heme o pocket. The Cytoplasmic portion of the chain corresponds to 76–91; it reads CIRSWRVMGHVRETKP. A helical membrane pass occupies residues 92–112; it reads LAVLSFVFLVLQSLIGAAAVV. Residues 113–123 lie on the Extracellular side of the membrane; it reads WGQSDFVMALH. Histidine 123 is a heme o binding site. A helical membrane pass occupies residues 124-144; sequence FGISLISFAAVLLLTLLIFVV. The Cytoplasmic segment spans residues 145 to 159; sequence DKKFSPTSLQLDGQM. A helical transmembrane segment spans residues 160–180; sequence RFHIYGIIIYSYLVVYTGALV. The Extracellular portion of the chain corresponds to 181-214; the sequence is RHTNASLACPSWPLCAKSRLLPVQFHEWVQMGHR. A disulfide bond links cysteine 189 and cysteine 195. A heme b-binding site is contributed by histidine 213. The helical transmembrane segment at 215-235 threads the bilayer; that stretch reads LAAAVIIIWIAVATVHAARYY. The Cytoplasmic portion of the chain corresponds to 236 to 243; that stretch reads REQPVIYY. The helical transmembrane segment at 244-264 threads the bilayer; the sequence is GWIISLLLVLAQMVTGALVVF. Topologically, residues 265–272 are extracellular; sequence TELNLYIS. Residues 273–293 form a helical membrane-spanning segment; that stretch reads LAHAFFISCLFGVLSYLLLLA. Residue histidine 275 coordinates heme b. Topologically, residues 294–317 are cytoplasmic; that stretch reads LRTRRRPATAAGRSVEDTASAPLK.

Belongs to the COX15/CtaA family. Type 1 subfamily. Interacts with CtaB. Heme b serves as cofactor.

It localises to the cell membrane. It catalyses the reaction Fe(II)-heme o + 2 A + H2O = Fe(II)-heme a + 2 AH2. Its pathway is porphyrin-containing compound metabolism; heme A biosynthesis; heme A from heme O: step 1/1. Its function is as follows. Catalyzes the conversion of heme O to heme A by two successive hydroxylations of the methyl group at C8. The first hydroxylation forms heme I, the second hydroxylation results in an unstable dihydroxymethyl group, which spontaneously dehydrates, resulting in the formyl group of heme A. The sequence is that of Heme A synthase from Geobacillus thermodenitrificans.